The sequence spans 393 residues: Stimulated by retinoic acid gene 8 protein (393 aa).

Over residues 1-11 (MATPGEGNQPS) the composition is skewed to polar residues. The tract at residues 1–25 (MATPGEGNQPSDDGAPQPLAQLQKL) is disordered. A Nuclear localization signal (NLS) motif is present at residues 28 to 33 (RVVRRR). The stretch at 66–95 (QVLNRTKIHIQEQEESLDKLLKLKASFNLQ) forms a coiled coil. Positions 124–201 (FLQDSPPEWF…EEKKVDLSHS (78 aa)) are disordered. Residues 141–192 (DAEEEGEEEGEEEGEEGEEEEEGDEEGEEEEENGEEREVEEYQEEEEEEEEE) are compositionally biased toward acidic residues. Positions 209–218 (LMEFERYLNF) match the Nuclear export signal (NES) motif.

In terms of assembly, interacts with XPO1. Interacts with MEIOSIN. Post-translationally, phosphorylated in P19 EC cells. As to expression, expressed exclusively in premeiotic germ cells in both sexes. In females, is expressed in the embryonic ovary. In males, is expressed in pubertal and adult testes, in premeiotic spermatogenic cells. Expressed by some type A and B spermatogonia, preleptotene spermatocytes, and early leptotene spermatocytes (at protein level). Expression begins in late undifferentiated spermatogonia and persists during differentiating spermatogonia (at protein level).

It is found in the cytoplasm. Its subcellular location is the nucleus. In terms of biological role, meiosis-inducer required for the transition into meiosis for both female and male germ cells. In female germ cells, acts downstream of ZGLP1 as a key effector of the meiotic program: required for premeiotic DNA replication and subsequent events in meiotic prophase. During spermatogenesis, next to its role in meiotic initiation, promotes (but is not required for) spermatogonial differentiation. In complex with MEIOSIN, directly activates the transcription of a subset of critical meiotic genes playing a central role in cell-cycle switching from mitosis to meiosis. The sequence is that of Stimulated by retinoic acid gene 8 protein from Mus musculus (Mouse).